The chain runs to 360 residues: BLOC-1-related complex subunit 6 (360 aa).

The segment covering 1 to 10 has biased composition (basic and acidic residues); it reads MEAARGRLGP. The tract at residues 1–201 is disordered; sequence MEAARGRLGP…AGAGGGRRAT (201 aa). A compositionally biased stretch (polar residues) spans 23–35; that stretch reads VTFSGRPSRTLSK. The residue at position 41 (Thr41) is a Phosphothreonine. A compositionally biased stretch (basic and acidic residues) spans 71–83; sequence HRPELDTWEDKPS. Residues 89–100 are compositionally biased toward low complexity; the sequence is SGARGSRGTSGS. Ser130 is subject to Phosphoserine. The span at 144–156 shows a compositional bias: acidic residues; sequence EGDDDDDGDDEEA. The residue at position 173 (Ser173) is a Phosphoserine. Positions 179-198 are enriched in gly residues; sequence GACGGGGSSSSGEAGAGGGR. A Phosphothreonine modification is found at Thr201. Position 204 is a phosphoserine (Ser204).

Belongs to the BORCS6 family. In terms of assembly, component of the BLOC-one-related complex (BORC) which is composed of BLOC1S1, BLOC1S2, BORCS5, BORCS6, BORCS7, BORCS8, KXD1 and SNAPIN.

The protein localises to the lysosome membrane. In terms of biological role, as part of the BORC complex may play a role in lysosomes movement and localization at the cell periphery. Associated with the cytosolic face of lysosomes, the BORC complex may recruit ARL8B and couple lysosomes to microtubule plus-end-directed kinesin motor. The protein is BLOC-1-related complex subunit 6 of Rattus norvegicus (Rat).